The chain runs to 419 residues: Glutamyl-tRNA reductase (419 aa).

Substrate contacts are provided by residues 49–52 (TCNR), Ser107, 112–114 (EPQ), and Gln118. Cys50 functions as the Nucleophile in the catalytic mechanism. 187-192 (GAGETI) provides a ligand contact to NADP(+).

It belongs to the glutamyl-tRNA reductase family. In terms of assembly, homodimer.

It catalyses the reaction (S)-4-amino-5-oxopentanoate + tRNA(Glu) + NADP(+) = L-glutamyl-tRNA(Glu) + NADPH + H(+). It participates in porphyrin-containing compound metabolism; protoporphyrin-IX biosynthesis; 5-aminolevulinate from L-glutamyl-tRNA(Glu): step 1/2. Catalyzes the NADPH-dependent reduction of glutamyl-tRNA(Glu) to glutamate 1-semialdehyde (GSA). This chain is Glutamyl-tRNA reductase, found in Psychromonas ingrahamii (strain DSM 17664 / CCUG 51855 / 37).